The primary structure comprises 515 residues: Aldehyde dehydrogenase (515 aa).

Residues 1–12 (MTVAEQQPQHQG) show a composition bias toward polar residues. A disordered region spans residues 1-20 (MTVAEQQPQHQGYANPGTPG). Position 228–234 (228–234 (GFGLEAG)) interacts with NAD(+). Active-site residues include Glu-272 and Cys-311.

The protein belongs to the aldehyde dehydrogenase family.

It catalyses the reaction an aldehyde + NAD(+) + H2O = a carboxylate + NADH + 2 H(+). This Deinococcus radiodurans (strain ATCC 13939 / DSM 20539 / JCM 16871 / CCUG 27074 / LMG 4051 / NBRC 15346 / NCIMB 9279 / VKM B-1422 / R1) protein is Aldehyde dehydrogenase (aldA).